A 562-amino-acid polypeptide reads, in one-letter code: TBC1 domain family member 24 (562 aa).

Residues Lys-36, Arg-40, Lys-238, Arg-242, and 293-297 (RLFSR) each bind a 1,2-diacyl-sn-glycero-3-phospho-(1D-myo-inositol). The Rab-GAP TBC domain maps to 42–259 (GHWAKSHSLR…FFHKVRGGQP (218 aa)). The region spanning 337–549 (EIVSVKEMRD…ISIIEVWGFK (213 aa)) is the TLDc domain. The span at 451–464 (ASSGDNDANSSQSA) shows a compositional bias: low complexity. Positions 451–471 (ASSGDNDANSSQSAKDGIDPS) are disordered.

In terms of assembly, interacts with ARF6.

Its subcellular location is the cell membrane. It localises to the cytoplasm. The protein resides in the cytoplasmic vesicle membrane. The protein localises to the presynapse. May act as a GTPase-activating protein for Rab family protein(s). Involved in neuronal projections development, probably through a negative modulation of ARF6 function. Involved in the regulation of synaptic vesicle trafficking. The polypeptide is TBC1 domain family member 24 (tbc1d24) (Xenopus tropicalis (Western clawed frog)).